The sequence spans 451 residues: Zinc finger MYND domain-containing protein 10 homolog (451 aa).

Zn(2+)-binding residues include Cys-412, Cys-415, Cys-423, Cys-426, Cys-432, Cys-436, His-444, and Cys-448. Residues 412–448 (CATCQAKAKKKCACCKKVHYCSRDCQLKDWPQHKLVC) form an MYND-type zinc finger.

It belongs to the ZMYND10 family. Specifically expressed in cells with flagella and motile cilia: chordotonal sensory neurons and sperm.

It is found in the cytoplasm. It localises to the cell projection. The protein resides in the cilium. The protein localises to the dynein axonemal particle. Functionally, plays a role in axonemal structure organization and motility. May be involved in axonemal pre-assembly of inner and outer dynein arms (IDA and ODA, respectively) for proper axoneme building for cilia motility. This chain is Zinc finger MYND domain-containing protein 10 homolog, found in Drosophila melanogaster (Fruit fly).